Consider the following 328-residue polypeptide: L-tyrosine isonitrile synthase (328 aa).

Belongs to the isocyanide synthase family. In terms of assembly, monomer in solution.

It carries out the reaction D-ribulose 5-phosphate + L-tyrosine = (2S)-3-(4-hydroxyphenyl)-2-isocyanopropanoate + hydroxyacetone + formaldehyde + phosphate + H2O + H(+). Its function is as follows. Involved in the biosynthesis of paerucumarin, a cyclized isocyano derivative of tyrosine. Responsible for the synthesis of the isonitrile group on tyrosine using the C2 of ribulose 5-phosphate as the source of the carbon atom. The polypeptide is L-tyrosine isonitrile synthase (Pseudomonas aeruginosa (strain ATCC 15692 / DSM 22644 / CIP 104116 / JCM 14847 / LMG 12228 / 1C / PRS 101 / PAO1)).